We begin with the raw amino-acid sequence, 630 residues long: MSSEDQFTSIQWDRDDGENTNNTPTDTTIKSKSSKSKKSKKSSSKKKNGNKISPSSTTETSDADDTMKEVTDQLESTQINDDNHEVDDGNKEQNVDANQIGNSDEDPTNSLLLPVNPQPKEPQEEKEDLQQQLQQPQQQLASIQQEPAPIQPPFNAVVNDESLSIQQQQQQQQPTGYVDISYYEKYSIKTTVTHPNRDLDTASKPFISYLVTTTTDNPSILKLTKEKKPKQGEEYLTFSVRRRYGDFRYLYESLSNDFPTVMIPPLPSKSNFKYLTGDTFSSEFVHKRLHSLDRFIRFILQHKILSQSSIFHLFISNSNDWATFTTSLKLKDSSSDESGIVGRVVNEDLITETVMNFLTPSKHKKETNKDILEINDKLKKLYENLIKLDKIFTKLKKKNHELGNDYDQFSNQILKLSSVQKGEDSIMTTNFKIFSDSLNYFSKSYNEMYRYIDENFLISLQDLAKFCLRFIQLIKLKNDKSTDLAVLQDFLNKELANNSGGSGSGSGSGGSGLHQPPNPVISSYQGGIVNNTTQLIKDTLSTSNTTISNTIKSDKIKNLEQEIAKETKILTDLTNKIINEEYPNWEKFNKIEIKNSMLGLCDQNIKFYNDLLEKFGEVEMKLIKRLDEDM.

2 stretches are compositionally biased toward polar residues: residues 1–11 and 19–28; these read MSSEDQFTSIQ and NTNNTPTDTT. The disordered stretch occupies residues 1–143; that stretch reads MSSEDQFTSI…QQPQQQLASI (143 aa). Residues 32–49 are compositionally biased toward basic residues; that stretch reads KSSKSKKSKKSSSKKKNG. Over residues 50-60 the composition is skewed to low complexity; the sequence is NKISPSSTTET. Basic and acidic residues predominate over residues 81-94; the sequence is DDNHEVDDGNKEQN. A compositionally biased stretch (low complexity) spans 130-143; that stretch reads QQQLQQPQQQLASI. Positions 187–321 constitute a PX domain; sequence SIKTTVTHPN…HLFISNSNDW (135 aa). Positions 243, 269, and 288 each coordinate a 1,2-diacyl-sn-glycero-3-phospho-(1D-myo-inositol-3-phosphate). Coiled coils occupy residues 361–413 and 550–581; these read SKHK…SNQI and TIKS…INEE.

It belongs to the sorting nexin family.

It localises to the cytoplasm. The protein localises to the cytosol. Its subcellular location is the preautophagosomal structure membrane. It is found in the endosome membrane. Functionally, sorting nexin, involved in the separation or division of vacuoles throughout the entire life cycle of the cells. Involved in retrieval of late-Golgi SNAREs from post-Golgi endosomes to the trans-Golgi network, for cytoplasm to vacuole transport (Cvt), and autophagy of large cargos including mitophagy, pexophagy and glycophagy. The chain is Sorting nexin-4 (SNX4) from Candida albicans (strain SC5314 / ATCC MYA-2876) (Yeast).